Reading from the N-terminus, the 210-residue chain is Holliday junction branch migration complex subunit RuvA (210 aa).

A domain I region spans residues 1–64 (MIGLIEGRVC…EDAQLLYGFL (64 aa)). The interval 65 to 143 (HPTERDVFRQ…HIQSDMSLLT (79 aa)) is domain II. Residues 144-154 (EVEQQIGIAAN) form a flexible linker region. Residues 155–210 (SEGVILAEVESALISLGYRDKEAQQAIKAARETDAGQQLVDTQSLLKLTLKQLSNF) are domain III.

This sequence belongs to the RuvA family. In terms of assembly, homotetramer. Forms an RuvA(8)-RuvB(12)-Holliday junction (HJ) complex. HJ DNA is sandwiched between 2 RuvA tetramers; dsDNA enters through RuvA and exits via RuvB. An RuvB hexamer assembles on each DNA strand where it exits the tetramer. Each RuvB hexamer is contacted by two RuvA subunits (via domain III) on 2 adjacent RuvB subunits; this complex drives branch migration. In the full resolvosome a probable DNA-RuvA(4)-RuvB(12)-RuvC(2) complex forms which resolves the HJ.

Its subcellular location is the cytoplasm. Its function is as follows. The RuvA-RuvB-RuvC complex processes Holliday junction (HJ) DNA during genetic recombination and DNA repair, while the RuvA-RuvB complex plays an important role in the rescue of blocked DNA replication forks via replication fork reversal (RFR). RuvA specifically binds to HJ cruciform DNA, conferring on it an open structure. The RuvB hexamer acts as an ATP-dependent pump, pulling dsDNA into and through the RuvAB complex. HJ branch migration allows RuvC to scan DNA until it finds its consensus sequence, where it cleaves and resolves the cruciform DNA. This Psychrobacter sp. (strain PRwf-1) protein is Holliday junction branch migration complex subunit RuvA.